Reading from the N-terminus, the 321-residue chain is tRNA-5-methyluridine(54) 2-sulfurtransferase (321 aa).

Zn(2+) contacts are provided by Cys-3, Cys-6, Cys-22, and His-25. ATP-binding positions include 53–55 (AVS), Asp-59, and Ile-79. The [4Fe-4S] cluster site is built by Cys-130 and Cys-133. Lys-137 participates in a covalent cross-link: Glycyl lysine isopeptide (Lys-Gly) (interchain with G-Cter in TtuB). ATP contacts are provided by Gly-156 and Asp-161. Cys-222 is a [4Fe-4S] cluster binding site. Residues Lys-226 and Lys-229 each participate in a glycyl lysine isopeptide (Lys-Gly) (interchain with G-Cter in TtuB) cross-link. 4 residues coordinate Zn(2+): Cys-274, Cys-277, Cys-286, and Cys-289.

Belongs to the TtcA family. TtuA subfamily. As to quaternary structure, homodimer. Is able to form a heterocomplex with TtuB. It depends on [4Fe-4S] cluster as a cofactor. Mg(2+) serves as cofactor. Post-translationally, conjugated to TtuB via covalent linkages involving Lys-137, Lys-226 and Lys-229.

It carries out the reaction [TtuB sulfur-carrier protein]-C-terminal-Gly-aminoethanethioate + 5-methyluridine(54) in tRNA + ATP + H2O = [TtuB sulfur-carrier protein]-C-terminal Gly-Gly + 5-methyl-2-thiouridine(54) in tRNA + AMP + diphosphate + H(+). The protein operates within tRNA modification. With respect to regulation, enzymatic activity may be regulated by TtuB conjugation. In terms of biological role, catalyzes the ATP-dependent 2-thiolation of 5-methyluridine residue at position 54 in the T loop of tRNAs, leading to 5-methyl-2-thiouridine (m(5)s(2)U or s(2)T). This modification allows thermal stabilization of tRNAs in thermophilic microorganisms, and is required for cell growth at high temperatures. TtuA transfers the S atom from the thiocarboxylated C-terminus of TtuB to tRNA. The sequence is that of tRNA-5-methyluridine(54) 2-sulfurtransferase from Thermus thermophilus (strain ATCC BAA-163 / DSM 7039 / HB27).